Reading from the N-terminus, the 313-residue chain is tRNA dimethylallyltransferase (313 aa).

Residue 10–17 (GPTASGKT) coordinates ATP. Residue 12-17 (TASGKT) coordinates substrate. 3 interaction with substrate tRNA regions span residues 35–38 (DSAM), 159–163 (QRIQR), and 240–245 (RCVGYR).

It belongs to the IPP transferase family. As to quaternary structure, monomer. Mg(2+) serves as cofactor.

It carries out the reaction adenosine(37) in tRNA + dimethylallyl diphosphate = N(6)-dimethylallyladenosine(37) in tRNA + diphosphate. Catalyzes the transfer of a dimethylallyl group onto the adenine at position 37 in tRNAs that read codons beginning with uridine, leading to the formation of N6-(dimethylallyl)adenosine (i(6)A). The chain is tRNA dimethylallyltransferase from Legionella pneumophila subsp. pneumophila (strain Philadelphia 1 / ATCC 33152 / DSM 7513).